The chain runs to 409 residues: Odorant receptor 35a (409 aa).

Topologically, residues 1–35 (MVRYVPRFADGQKVKLAWPLAVFRLNHIFWPLDPS) are cytoplasmic. A helical transmembrane segment spans residues 36–56 (TGKWGRYLDKVLAVAMSLVFM). The Extracellular segment spans residues 57 to 64 (QHNDAELR). The chain crosses the membrane as a helical span at residues 65–85 (YLRFEASNRNLDAFLTGMPTY). The Cytoplasmic segment spans residues 86–139 (LILVEAQFRSLHILLHFEKLQKFLEIFYANIYIDPRKEPEMFRKVDGKMIINRL). The helical transmembrane segment at 140–160 (VSAMYGAVISLYLIAPVFSII) threads the bilayer. N-linked (GlcNAc...) asparagine glycosylation occurs at Asn161. The Extracellular segment spans residues 161–177 (NQSKDFLYSMIFPFDSD). The chain crosses the membrane as a helical span at residues 178-198 (PLYIFVPLLLTNVWVGIVIDT). The Cytoplasmic segment spans residues 199–273 (MMFGETNLLC…QQLEAQYTVR (75 aa)). Residues 274–294 (VFIMFAFAAGLLCALSFKAYT) traverse the membrane as a helical segment. Topologically, residues 295-302 (NPMANYIY) are extracellular. Residues 303–323 (AIWFGAKTVELLSLGQIGSDL) form a helical membrane-spanning segment. Topologically, residues 324–379 (AFTTDSLSTMYYLTHWEQILQYSTNPSENLRLLKLINLAIEMNSKPFYVTGLKYFR) are cytoplasmic. Residues 380-400 (VSLQAGLKILQASFSYFTFLT) form a helical membrane-spanning segment. Topologically, residues 401–409 (SMQRRQMSN) are extracellular.

The protein belongs to the insect chemoreceptor superfamily. Heteromeric odorant receptor channel (TC 1.A.69) family. Or1a subfamily. In terms of assembly, interacts with Orco. Complexes exist early in the endomembrane system in olfactory sensory neurons (OSNs), coupling these complexes to the conserved ciliary trafficking pathway. As to expression, expressed in ac3B olfactory sensory neurons in the antenna.

It is found in the cell membrane. In terms of biological role, odorant receptor which mediates acceptance or avoidance behavior, depending on its substrates. The odorant receptor repertoire encodes a large collection of odor stimuli that vary widely in identity, intensity, and duration. Forms a complex with Orco to form odorant-sensing units, providing sensitive and prolonged odorant signaling and calcium permeability. Involved in the behavioral responses to esters. Involved in the behavioral responses to butanol, pentanol, hexanol, octanol, propyl acetate, and butyl acetate. In Drosophila melanogaster (Fruit fly), this protein is Odorant receptor 35a (Or35a).